The following is a 92-amino-acid chain: Small ribosomal subunit protein uS19 (92 aa).

The protein belongs to the universal ribosomal protein uS19 family.

Functionally, protein S19 forms a complex with S13 that binds strongly to the 16S ribosomal RNA. The protein is Small ribosomal subunit protein uS19 of Neisseria gonorrhoeae (strain ATCC 700825 / FA 1090).